The primary structure comprises 101 residues: Small ribosomal subunit protein uS14 (101 aa).

It belongs to the universal ribosomal protein uS14 family. As to quaternary structure, part of the 30S ribosomal subunit. Contacts proteins S3 and S10.

Its function is as follows. Binds 16S rRNA, required for the assembly of 30S particles and may also be responsible for determining the conformation of the 16S rRNA at the A site. This Novosphingobium aromaticivorans (strain ATCC 700278 / DSM 12444 / CCUG 56034 / CIP 105152 / NBRC 16084 / F199) protein is Small ribosomal subunit protein uS14.